A 259-amino-acid polypeptide reads, in one-letter code: Small ribosomal subunit protein eS1 (259 aa).

Alanine 2 carries the N-acetylalanine; partial modification.

Belongs to the eukaryotic ribosomal protein eS1 family. Component of the small ribosomal subunit. Mature ribosomes consist of a small (40S) and a large (60S) subunit. The 40S subunit contains about 33 different proteins and 1 molecule of RNA (18S). The 60S subunit contains about 49 different proteins and 3 molecules of RNA (25S, 5.8S and 5S).

It localises to the cytoplasm. The protein is Small ribosomal subunit protein eS1 of Cryptococcus neoformans var. neoformans serotype D (strain B-3501A) (Filobasidiella neoformans).